The sequence spans 219 residues: Ribose-5-phosphate isomerase A (219 aa).

Substrate is bound by residues Ser28–Thr31, Asp81–Asp84, and Lys94–Gly97. The Proton acceptor role is filled by Glu103. Lys121 serves as a coordination point for substrate.

The protein belongs to the ribose 5-phosphate isomerase family. Homodimer.

It catalyses the reaction aldehydo-D-ribose 5-phosphate = D-ribulose 5-phosphate. It functions in the pathway carbohydrate degradation; pentose phosphate pathway; D-ribose 5-phosphate from D-ribulose 5-phosphate (non-oxidative stage): step 1/1. Its function is as follows. Catalyzes the reversible conversion of ribose-5-phosphate to ribulose 5-phosphate. In Haemophilus influenzae (strain PittGG), this protein is Ribose-5-phosphate isomerase A.